Here is an 89-residue protein sequence, read N- to C-terminus: Small ribosomal subunit protein uS15 (89 aa).

This sequence belongs to the universal ribosomal protein uS15 family. In terms of assembly, part of the 30S ribosomal subunit. Forms a bridge to the 50S subunit in the 70S ribosome, contacting the 23S rRNA.

One of the primary rRNA binding proteins, it binds directly to 16S rRNA where it helps nucleate assembly of the platform of the 30S subunit by binding and bridging several RNA helices of the 16S rRNA. In terms of biological role, forms an intersubunit bridge (bridge B4) with the 23S rRNA of the 50S subunit in the ribosome. In Thermus thermophilus (strain ATCC BAA-163 / DSM 7039 / HB27), this protein is Small ribosomal subunit protein uS15.